Here is a 427-residue protein sequence, read N- to C-terminus: ATP synthase subunit beta (427 aa).

160–167 is an ATP binding site; sequence GGAGVGKT.

Belongs to the ATPase alpha/beta chains family. As to quaternary structure, F-type ATPases have 2 components, CF(1) - the catalytic core - and CF(0) - the membrane proton channel. CF(1) has five subunits: alpha(3), beta(3), gamma(1), delta(1), epsilon(1). CF(0) has three main subunits: a(1), b(2) and c(9-12). The alpha and beta chains form an alternating ring which encloses part of the gamma chain. CF(1) is attached to CF(0) by a central stalk formed by the gamma and epsilon chains, while a peripheral stalk is formed by the delta and b chains.

It localises to the cell membrane. The enzyme catalyses ATP + H2O + 4 H(+)(in) = ADP + phosphate + 5 H(+)(out). Its function is as follows. Produces ATP from ADP in the presence of a proton gradient across the membrane. The catalytic sites are hosted primarily by the beta subunits. The protein is ATP synthase subunit beta of Peptococcus niger.